Consider the following 236-residue polypeptide: MGQKVNPIGLRLGINRNWSSRWFSVSQTTPSNILEDHKIRKFLKREMYYAGVSEFIIERAANKIRVTVVASRPGLIIGKKGVDIDKHKEALKKILHKEVFINIKEAKRPQANAQLAAENIATQLEKRVAFRRAMKKVMQAAMKAGAKGIKVKVSGRLAGAEMARTEWYMEGRVPLHTLRAKIDYGFAEAMTTYGIIGVKVWIFKGEVLHKGILPEKKEESKSGDKEVRSKSRRGRQ.

The KH type-2 domain maps to 39–107 (IRKFLKREMY…EVFINIKEAK (69 aa)). A compositionally biased stretch (basic and acidic residues) spans 214-229 (PEKKEESKSGDKEVRS). The interval 214 to 236 (PEKKEESKSGDKEVRSKSRRGRQ) is disordered.

Belongs to the universal ribosomal protein uS3 family. Part of the 30S ribosomal subunit. Forms a tight complex with proteins S10 and S14.

Binds the lower part of the 30S subunit head. Binds mRNA in the 70S ribosome, positioning it for translation. This Helicobacter hepaticus (strain ATCC 51449 / 3B1) protein is Small ribosomal subunit protein uS3.